The primary structure comprises 342 residues: Uroporphyrinogen decarboxylase (342 aa).

Substrate contacts are provided by residues Arg-22–Arg-26, Phe-42, Asp-72, Tyr-146, Ser-201, and His-317.

This sequence belongs to the uroporphyrinogen decarboxylase family. As to quaternary structure, homodimer.

It localises to the cytoplasm. It catalyses the reaction uroporphyrinogen III + 4 H(+) = coproporphyrinogen III + 4 CO2. Its pathway is porphyrin-containing compound metabolism; protoporphyrin-IX biosynthesis; coproporphyrinogen-III from 5-aminolevulinate: step 4/4. Its function is as follows. Catalyzes the decarboxylation of four acetate groups of uroporphyrinogen-III to yield coproporphyrinogen-III. This chain is Uroporphyrinogen decarboxylase, found in Orientia tsutsugamushi (strain Ikeda) (Rickettsia tsutsugamushi).